We begin with the raw amino-acid sequence, 1436 residues long: Pleiotropic drug resistance protein 1 (1436 aa).

In terms of domain architecture, ABC transporter 1 spans 165 to 438 (LDSIHILPSK…FESMGFKCPE (274 aa)). 198–205 (GPPGSGKT) contributes to the ATP binding site. Residues 516 to 729 (QLLKVCTERE…SVNAILVNEF (214 aa)) enclose the ABC transmembrane type-2 1 domain. Helical transmembrane passes span 534 to 554 (FVYLFKFFQLLIIALMTMTIF), 567 to 587 (GGIYSGALFFVVIMIMFNGLS), 622 to 642 (IPVTFAEVGMWVFLTYYVMGF), 653 to 673 (FLLLLLVNQMASALFRFIAAV), 679 to 699 (VASTFGAFALLLQFALGGFIL), 707 to 727 (WWIWGYWTSPLMYSVNAILVN), and 764 to 784 (IGVGALAGFIVMFNIAYSVAL). Residues 796-826 (TISDESENNESESSPQITSTQEGDSASENKK) are disordered. Residues 810-821 (PQITSTQEGDSA) are compositionally biased toward polar residues. The ABC transporter 2 domain maps to 838–1090 (ITFDEVVYSV…HLIKYFESIP (253 aa)). Residue 883-890 (GVSGAGKT) participates in ATP binding. The region spanning 1163–1377 (TQCMACLWKQ…TLYGLVASQF (215 aa)) is the ABC transmembrane type-2 2 domain. 7 helical membrane-spanning segments follow: residues 1184 to 1204 (AVRLIFTTFIALIFGTMFWDI), 1214 to 1234 (LVNAMGSMYAAVLFLGVQNSS), 1270 to 1290 (IPYIFVQATVYGLIVYSMIGF), 1301 to 1321 (FFFMFFTFLYFTFFGMMTVAV), 1327 to 1347 (VASIVAGFFYTVWNLFSGFIV), 1358 to 1378 (WYYWGCPIAWTLYGLVASQFG), and 1408 to 1428 (VVAAVIVAFAVVFAFTFALGI).

This sequence belongs to the ABC transporter superfamily. ABCG family. PDR (TC 3.A.1.205) subfamily. Roots, petals and leaf epidermis, where it is confined to glandular trichomes (at protein level).

The protein localises to the cell membrane. Its function is as follows. Excretes secondary metabolites such as terpenes. Involved in both constitutive and jasmonic acid-dependent induced defense. Confers some resistance to sclareol and B.cinerea. The protein is Pleiotropic drug resistance protein 1 (PDR1) of Nicotiana plumbaginifolia (Leadwort-leaved tobacco).